The chain runs to 880 residues: 3-isopropylmalate dehydratase large subunit gloJ (880 aa).

3 residues coordinate [4Fe-4S] cluster: Cys457, Cys520, and Cys523.

Belongs to the aconitase/IPM isomerase family. LeuC type 2 subfamily. The cofactor is [4Fe-4S] cluster.

It catalyses the reaction (2R,3S)-3-isopropylmalate = (2S)-2-isopropylmalate. The protein operates within mycotoxin biosynthesis. In terms of biological role, 3-isopropylmalate dehydratase large subunit; part of the gene cluster that mediates the biosynthesis of pneumocandins, lipohexapeptides of the echinocandin family that prevent fungal cell wall formation by non-competitive inhibition of beta-1,3-glucan synthase. The 10,12-dimethylmyristoyl side chain is synthesized by the reducing polyketide synthase gloL/GLPKS4. The thioesterase gloN/GLHYD exclusively interacts with gloL/GLPKS4 to maintain turnover of the polyketide side chain. The 10R,12S-dimethylmyristic acid is then transferred to the first thiolation domain of the nonribosomal peptide synthetase gloA/GLNRPS4 by the acyl-AMP ligase gloD/GLligase, followed by its acylation to L-ornithine to trigger elongation of the cyclic hexapeptide. L-ornithine, 4R-hydroxyl-L-proline (generated from L-proline by the dioxygenase gloF/GLOXY2), 3S-hydroxyl-L-homotyrosine (generated by gloG/GLHtyB, gloH/GLHtyA, gloI/GLHtyC, gloJ/GLHtyD and hydroxylated at C-3 by the dioxygenase gloM/GLOXY1), 3R-hydroxyl-L-glutamine (generated from L-glutamine probably by the dioxygenase gloE/GLOXY3) and 3S-hydroxyl-L-proline (generated from L-proline by the dioxygenase gloF/GLOXY2 to yield pneumocandin B0), or 3S-hydroxyl-4S-methyl-L-proline (generated from L-leucine by the dioxygenase gloC/GLOXY4 to yield pneumocandin A0) are sequentially added to the growing chain. The last C domain of gloA/GLNRPS4 is proposed to be responsible for cyclization by condensation to form the peptide bond between L-ornithine and 3S-hydroxyl-4S-methyl-L-proline (for pneumocandin A0) or 3S-hydroxyl-L-proline (for pneumocandin B0). Finally, the subsequent C-4 hydroxylation of 3S-hydroxyl-L-homotyrosine and L-ornithine dihydroxylation at C-4 and C-5 are performed by the cytochrome P450 monooxygenases gloP/GLP450-1 and gloO/GLP450-2, respectively. The sequence is that of 3-isopropylmalate dehydratase large subunit gloJ from Glarea lozoyensis (strain ATCC 20868 / MF5171).